The chain runs to 715 residues: Glycine--tRNA ligase beta subunit (715 aa).

It belongs to the class-II aminoacyl-tRNA synthetase family. As to quaternary structure, tetramer of two alpha and two beta subunits.

Its subcellular location is the cytoplasm. It carries out the reaction tRNA(Gly) + glycine + ATP = glycyl-tRNA(Gly) + AMP + diphosphate. This Nitrosomonas europaea (strain ATCC 19718 / CIP 103999 / KCTC 2705 / NBRC 14298) protein is Glycine--tRNA ligase beta subunit.